The following is an 86-amino-acid chain: Neurotoxin 3FTx-8a (86 aa).

An N-terminal signal peptide occupies residues 1–21; sequence MKTLLLTLVVVTIVCLDLGYT. Intrachain disulfides connect C24/C45, C27/C32, C38/C63, C67/C78, and C79/C84.

Expressed by the venom gland.

The protein resides in the secreted. Binds with low affinity to muscular (alpha-1-beta-1-delta-epsilon/CHRNA1-CHRNB1-CHRND-CHRNE) and very low affinity to neuronal (alpha-7/CHRNA7) nicotinic acetylcholine receptor (nAChR). The chain is Neurotoxin 3FTx-8a from Bungarus fasciatus (Banded krait).